The primary structure comprises 702 residues: Dissimilatory sulfite reductase MccA (702 aa).

Positions 1–39 are cleaved as a signal peptide; it reads MLSGWSVLKGGNMKYWDKALLSLFMCVSTLSIAATHAVA. Heme c is bound by residues Cys-155, Cys-158, His-159, and His-171. The substrate site is built by Lys-220 and Tyr-297. Residues Cys-314, Cys-317, His-318, Cys-351, Cys-354, His-355, His-360, Cys-372, Cys-375, and His-376 each contribute to the heme c site. Position 378 (Arg-378) interacts with substrate. Cys-411 provides a ligand contact to Cu(+). Residues His-423, Cys-430, Cys-433, His-434, His-437, Cys-474, Cys-477, His-478, His-491, Cys-496, Cys-499, and His-500 each coordinate heme c. Cys-507 is a Cu(+) binding site. Heme c is bound by residues His-528, Cys-574, Cys-590, His-591, and His-675.

Belongs to the multiheme cytochrome c family. In terms of assembly, homotrimer. It depends on Cu(+) as a cofactor. Heme c is required as a cofactor.

It is found in the periplasm. It catalyses the reaction [protein]-disulfide + hydrogen sulfide + 2 A + 3 H2O = [protein]-dithiol + sulfite + 2 AH2 + H(+). The protein operates within sulfur metabolism; sulfite reduction. In terms of biological role, respiratory sulfite reductase that catalyzes the reduction of sulfite to sulfide in a single step, consuming six electrons in the process. Required for sulfite respiration under anaerobic growth conditions. Has only marginal activity with nitrite. The polypeptide is Dissimilatory sulfite reductase MccA (Wolinella succinogenes (strain ATCC 29543 / DSM 1740 / CCUG 13145 / JCM 31913 / LMG 7466 / NCTC 11488 / FDC 602W) (Vibrio succinogenes)).